Consider the following 430-residue polypeptide: 3-phosphoshikimate 1-carboxyvinyltransferase (430 aa).

Residues K20, S21, and R25 each coordinate 3-phosphoshikimate. K20 lines the phosphoenolpyruvate pocket. Phosphoenolpyruvate contacts are provided by G92 and R120. Residues S166, Q168, D312, and K339 each coordinate 3-phosphoshikimate. Q168 provides a ligand contact to phosphoenolpyruvate. D312 (proton acceptor) is an active-site residue. Residues R343 and R387 each contribute to the phosphoenolpyruvate site.

This sequence belongs to the EPSP synthase family. In terms of assembly, monomer.

The protein localises to the cytoplasm. It carries out the reaction 3-phosphoshikimate + phosphoenolpyruvate = 5-O-(1-carboxyvinyl)-3-phosphoshikimate + phosphate. It functions in the pathway metabolic intermediate biosynthesis; chorismate biosynthesis; chorismate from D-erythrose 4-phosphate and phosphoenolpyruvate: step 6/7. Functionally, catalyzes the transfer of the enolpyruvyl moiety of phosphoenolpyruvate (PEP) to the 5-hydroxyl of shikimate-3-phosphate (S3P) to produce enolpyruvyl shikimate-3-phosphate and inorganic phosphate. The protein is 3-phosphoshikimate 1-carboxyvinyltransferase of Lactococcus lactis subsp. cremoris (strain MG1363).